The sequence spans 2508 residues: Male gametocyte surface protein P230p (2508 aa).

The first 34 residues, 1–34, serve as a signal peptide directing secretion; that stretch reads MFIYLFIYLFFKMDKKRTFYYLFFFFTFLVYVLY. Asparagine 230, asparagine 254, asparagine 362, and asparagine 414 each carry an N-linked (GlcNAc...) asparagine glycan. The 123-residue stretch at 394 to 516 folds into the 6-Cys 1 domain; it reads KILGLSTNEK…GLGETSVDKD (123 aa). An intrachain disulfide couples cysteine 443 to cysteine 493. Residues asparagine 601 and asparagine 674 are each glycosylated (N-linked (GlcNAc...) asparagine). 6-Cys domains lie at 676 to 800, 831 to 1096, 1099 to 1231, 1268 to 1428, and 1433 to 1565; these read SVSF…IVKR, ITYL…LKSF, PIEG…LELN, KKHI…IPQH, and KFYG…NEDI. Cysteine 680 and cysteine 700 form a disulfide bridge. Asparagine 703 is a glycosylation site (N-linked (GlcNAc...) asparagine). Disulfide bonds link cysteine 714-cysteine 775 and cysteine 725-cysteine 773. N-linked (GlcNAc...) asparagine glycans are attached at residues asparagine 779, asparagine 849, asparagine 986, asparagine 995, asparagine 1065, and asparagine 1074. 2 disulfides stabilise this stretch: cysteine 835-cysteine 856 and cysteine 871-cysteine 1072. Intrachain disulfides connect cysteine 1103–cysteine 1129, cysteine 1144–cysteine 1206, and cysteine 1157–cysteine 1204. The N-linked (GlcNAc...) asparagine glycan is linked to asparagine 1231. Intrachain disulfides connect cysteine 1272–cysteine 1293, cysteine 1308–cysteine 1404, cysteine 1437–cysteine 1464, cysteine 1478–cysteine 1547, and cysteine 1488–cysteine 1545. Asparagine 1385 is a glycosylation site (N-linked (GlcNAc...) asparagine). Asparagine 1525, asparagine 1550, asparagine 1567, asparagine 1750, asparagine 1755, and asparagine 1788 each carry an N-linked (GlcNAc...) asparagine glycan. 2 6-Cys domains span residues 1656-1804 and 1807-1984; these read KKKI…IKKN and KILG…IVGD. Cysteine 1704 and cysteine 1782 are disulfide-bonded. 3 disulfide bridges follow: cysteine 1811-cysteine 1883, cysteine 1897-cysteine 1966, and cysteine 1908-cysteine 1964. Asparagine 2016 and asparagine 2047 each carry an N-linked (GlcNAc...) asparagine glycan. Positions 2081–2113 are disordered; it reads SDEGDGYQADEDIGGEDDAEDVDGEGDDEDDNI. Residues 2082–2112 are compositionally biased toward acidic residues; the sequence is DEGDGYQADEDIGGEDDAEDVDGEGDDEDDN. Asparagine 2143, asparagine 2211, asparagine 2239, and asparagine 2255 each carry an N-linked (GlcNAc...) asparagine glycan. 2 consecutive 6-Cys domains span residues 2197-2354 and 2357-2481; these read IINI…VKSN and KIYG…YEPY. Cystine bridges form between cysteine 2361–cysteine 2386, cysteine 2400–cysteine 2461, and cysteine 2411–cysteine 2459.

The protein resides in the cell surface. It is found in the cell membrane. Its function is as follows. Plays an essential role in male gamete fertility. Required for the binding to erythrocytes and thus, for the formation of exflagellation centers. The sequence is that of Male gametocyte surface protein P230p (PFS230P) from Plasmodium falciparum (isolate 3D7).